We begin with the raw amino-acid sequence, 98 residues long: NADH-ubiquinone oxidoreductase chain 4L (98 aa).

The next 3 membrane-spanning stretches (helical) occupy residues 1–21, 29–49, and 61–81; these read MSLI…GLLM, SLLC…MMVL, and IILL…LVMI.

The protein belongs to the complex I subunit 4L family. As to quaternary structure, core subunit of respiratory chain NADH dehydrogenase (Complex I) which is composed of 45 different subunits.

It localises to the mitochondrion inner membrane. It carries out the reaction a ubiquinone + NADH + 5 H(+)(in) = a ubiquinol + NAD(+) + 4 H(+)(out). Core subunit of the mitochondrial membrane respiratory chain NADH dehydrogenase (Complex I) which catalyzes electron transfer from NADH through the respiratory chain, using ubiquinone as an electron acceptor. Part of the enzyme membrane arm which is embedded in the lipid bilayer and involved in proton translocation. The chain is NADH-ubiquinone oxidoreductase chain 4L (MT-ND4L) from Rhinoceros unicornis (Greater Indian rhinoceros).